We begin with the raw amino-acid sequence, 63 residues long: Cytochrome c oxidase subunit 7C, mitochondrial (63 aa).

Residues Met-1 to Arg-16 constitute a mitochondrion transit peptide. Over Ser-17–Asn-33 the chain is Mitochondrial matrix. An N6-acetyllysine; alternate modification is found at Lys-25. Lys-25 bears the N6-succinyllysine; alternate mark. A helical transmembrane segment spans residues Lys-34–Leu-60. Residues Leu-61 to Lys-63 are Mitochondrial intermembrane-facing.

This sequence belongs to the cytochrome c oxidase VIIc family. Component of the cytochrome c oxidase (complex IV, CIV), a multisubunit enzyme composed of 14 subunits. The complex is composed of a catalytic core of 3 subunits MT-CO1, MT-CO2 and MT-CO3, encoded in the mitochondrial DNA, and 11 supernumerary subunits COX4I, COX5A, COX5B, COX6A, COX6B, COX6C, COX7A, COX7B, COX7C, COX8 and NDUFA4, which are encoded in the nuclear genome. The complex exists as a monomer or a dimer and forms supercomplexes (SCs) in the inner mitochondrial membrane with NADH-ubiquinone oxidoreductase (complex I, CI) and ubiquinol-cytochrome c oxidoreductase (cytochrome b-c1 complex, complex III, CIII), resulting in different assemblies (supercomplex SCI(1)III(2)IV(1) and megacomplex MCI(2)III(2)IV(2)). Interacts with RAB5IF.

It is found in the mitochondrion inner membrane. It participates in energy metabolism; oxidative phosphorylation. Functionally, component of the cytochrome c oxidase, the last enzyme in the mitochondrial electron transport chain which drives oxidative phosphorylation. The respiratory chain contains 3 multisubunit complexes succinate dehydrogenase (complex II, CII), ubiquinol-cytochrome c oxidoreductase (cytochrome b-c1 complex, complex III, CIII) and cytochrome c oxidase (complex IV, CIV), that cooperate to transfer electrons derived from NADH and succinate to molecular oxygen, creating an electrochemical gradient over the inner membrane that drives transmembrane transport and the ATP synthase. Cytochrome c oxidase is the component of the respiratory chain that catalyzes the reduction of oxygen to water. Electrons originating from reduced cytochrome c in the intermembrane space (IMS) are transferred via the dinuclear copper A center (CU(A)) of subunit 2 and heme A of subunit 1 to the active site in subunit 1, a binuclear center (BNC) formed by heme A3 and copper B (CU(B)). The BNC reduces molecular oxygen to 2 water molecules using 4 electrons from cytochrome c in the IMS and 4 protons from the mitochondrial matrix. The protein is Cytochrome c oxidase subunit 7C, mitochondrial (Cox7c) of Rattus norvegicus (Rat).